Here is a 187-residue protein sequence, read N- to C-terminus: MGRYSRDPENPAKSCKARGSNLRVHFKNTYETAMAIRKMPLRRAVRYLKNVTEKKECIPFRRFNGGVGRCAQAKQFGTTQGRWPKKSAEFPLQLLRNAESNADYKGLDVDRLVIDHIQVNRAPCLRRRTYRAHGRINPYMSSPCHIEVALSEREDAVSRAAPTDDAPAKKKLSKKKLARQKEKMMRE.

A disordered region spans residues 155–187; it reads DAVSRAAPTDDAPAKKKLSKKKLARQKEKMMRE. Residues 169-178 show a composition bias toward basic residues; the sequence is KKKLSKKKLA.

The protein belongs to the universal ribosomal protein uL22 family.

In Lonomia obliqua (Moth), this protein is Large ribosomal subunit protein uL22 (RpL17).